The sequence spans 144 residues: Large ribosomal subunit protein uL15 (144 aa).

The interval 1-49 (MRLNTLSPAAGAKSAAKRVGRGIGSGTGKTCGRGHKGQKSRSGGGVRVG) is disordered. Gly residues predominate over residues 21–31 (RGIGSGTGKTC).

This sequence belongs to the universal ribosomal protein uL15 family. In terms of assembly, part of the 50S ribosomal subunit.

Binds to the 23S rRNA. This Shewanella sediminis (strain HAW-EB3) protein is Large ribosomal subunit protein uL15.